The following is a 1330-amino-acid chain: ESX-3 secretion system protein EccC3 (1330 aa).

2 consecutive transmembrane segments (helical) span residues 43-63 (LPYLIGILIVGMIVALVATGM) and 65-85 (VISPQTLFFPFVLLLAATALY). 3 FtsK domains span residues 456–662 (GEPL…SVSR), 811–1000 (RDPL…RDSN), and 1090–1280 (LAPV…ADSG). ATP is bound by residues 479–486 (GMTGSGKS), 829–836 (GGPKSGKS), and 1107–1114 (GDARSGKT).

In terms of assembly, part of the ESX-3 / type VII secretion system (T7SS), which is composed of cytosolic and membrane components. The ESX-3 membrane complex is composed of EccB3, EccC3, EccD3 and EccE3.

The protein resides in the cell inner membrane. Functionally, part of the ESX-3 specialized secretion system, which is important for iron and zinc uptake or homeostasis. The sequence is that of ESX-3 secretion system protein EccC3 from Mycobacterium tuberculosis (strain CDC 1551 / Oshkosh).